A 413-amino-acid chain; its full sequence is Tyrosine--tRNA ligase (413 aa).

Residues 59–68 carry the 'HIGH' region motif; it reads PTAPDIHLGH. The 'KMSKS' region signature appears at 243–247; the sequence is KMSKS. Lysine 246 contributes to the ATP binding site. The region spanning 351–411 is the S4 RNA-binding domain; it reads LAIGQLLKQA…GKRRFARVTL (61 aa).

Belongs to the class-I aminoacyl-tRNA synthetase family. TyrS type 2 subfamily. As to quaternary structure, homodimer.

It localises to the cytoplasm. It catalyses the reaction tRNA(Tyr) + L-tyrosine + ATP = L-tyrosyl-tRNA(Tyr) + AMP + diphosphate + H(+). In terms of biological role, catalyzes the attachment of tyrosine to tRNA(Tyr) in a two-step reaction: tyrosine is first activated by ATP to form Tyr-AMP and then transferred to the acceptor end of tRNA(Tyr). The chain is Tyrosine--tRNA ligase from Burkholderia pseudomallei (strain 1710b).